The sequence spans 242 residues: Ferritin, mitochondrial (242 aa).

The transit peptide at 1–49 directs the protein to the mitochondrion; that stretch reads MLSCFRLLSRHISPSLASLRPVRCCFALPLRWAPGRPLDPRQIAPRRPL. The span at 47 to 58 shows a compositional bias: low complexity; the sequence is RPLAAAASSRDP. The tract at residues 47–71 is disordered; that stretch reads RPLAAAASSRDPTGPAAGPSRVRQN. Positions 70–219 constitute a Ferritin-like diiron domain; it reads QNFHPDSEAA…DHVHNLVKMG (150 aa). Residues Glu-87, Glu-122, His-125, Glu-167, and Gln-201 each contribute to the Fe cation site.

Belongs to the ferritin family. Homooligomer of 24 subunits. The functional molecule is roughly spherical and contains a central cavity into which the polymeric mineral iron core is deposited. Detected in testis and erythroleukemia. Expression is very low or not detectable in brain, colon, heart, kidney, liver, lung, muscle, placental, spleen and small intestine.

The protein resides in the mitochondrion. The catalysed reaction is 4 Fe(2+) + O2 + 4 H(+) = 4 Fe(3+) + 2 H2O. Functionally, catalyzes the oxidation of ferrous iron(II) to ferric iron(III) and stores iron in a soluble, non-toxic, readily available form. Important for iron homeostasis. Iron is taken up in the ferrous form and deposited as ferric hydroxides after oxidation. In Homo sapiens (Human), this protein is Ferritin, mitochondrial.